We begin with the raw amino-acid sequence, 239 residues long: LexA repressor (239 aa).

Positions Phe-26–Thr-46 form a DNA-binding region, H-T-H motif. Active-site for autocatalytic cleavage activity residues include Ser-160 and Lys-198.

Belongs to the peptidase S24 family. Homodimer.

It carries out the reaction Hydrolysis of Ala-|-Gly bond in repressor LexA.. Functionally, represses a number of genes involved in the response to DNA damage (SOS response), including recA and lexA. In the presence of single-stranded DNA, RecA interacts with LexA causing an autocatalytic cleavage which disrupts the DNA-binding part of LexA, leading to derepression of the SOS regulon and eventually DNA repair. In Methylobacterium sp. (strain 4-46), this protein is LexA repressor.